The following is a 135-amino-acid chain: ATP synthase epsilon chain (135 aa).

The protein belongs to the ATPase epsilon chain family. As to quaternary structure, F-type ATPases have 2 components, CF(1) - the catalytic core - and CF(0) - the membrane proton channel. CF(1) has five subunits: alpha(3), beta(3), gamma(1), delta(1), epsilon(1). CF(0) has three main subunits: a, b and c.

Its subcellular location is the cell inner membrane. Functionally, produces ATP from ADP in the presence of a proton gradient across the membrane. This is ATP synthase epsilon chain from Mesorhizobium japonicum (strain LMG 29417 / CECT 9101 / MAFF 303099) (Mesorhizobium loti (strain MAFF 303099)).